The following is a 562-amino-acid chain: NAD-dependent malic enzyme (562 aa).

The active-site Proton donor is Tyr101. NAD(+) is bound at residue Arg154. Residue Lys172 is the Proton acceptor of the active site. Positions 243, 244, and 267 each coordinate a divalent metal cation. Residues Asp267 and Asn415 each contribute to the NAD(+) site.

This sequence belongs to the malic enzymes family. Homotetramer. Requires Mg(2+) as cofactor. The cofactor is Mn(2+).

The enzyme catalyses (S)-malate + NAD(+) = pyruvate + CO2 + NADH. It carries out the reaction oxaloacetate + H(+) = pyruvate + CO2. The protein is NAD-dependent malic enzyme of Shewanella oneidensis (strain ATCC 700550 / JCM 31522 / CIP 106686 / LMG 19005 / NCIMB 14063 / MR-1).